The following is a 375-amino-acid chain: Alanine racemase, catabolic (375 aa).

Lys-38 functions as the Proton acceptor; specific for D-alanine in the catalytic mechanism. N6-(pyridoxal phosphate)lysine is present on Lys-38. The Proton acceptor; specific for L-alanine role is filled by Tyr-269.

It belongs to the alanine racemase family. It depends on pyridoxal 5'-phosphate as a cofactor.

The enzyme catalyses L-alanine = D-alanine. The protein operates within amino-acid biosynthesis; D-alanine biosynthesis; D-alanine from L-alanine: step 1/1. In Schizosaccharomyces pombe (strain 972 / ATCC 24843) (Fission yeast), this protein is Alanine racemase, catabolic (alr1).